We begin with the raw amino-acid sequence, 67 residues long: Pepsin B (67 aa).

The propeptide at 1-43 is activation peptide; it reads MERIILRKGKSIREAMEEQGVLEKFLKNRPKIDPAAKYHFNND.

Belongs to the peptidase A1 family.

Its subcellular location is the secreted. It carries out the reaction Degradation of gelatin, little activity on hemoglobin. Specificity on B chain of insulin more restricted than that of pepsin A. Does not cleave 1-Phe-|-Val-2, 4-Gln-|-His-5 or 23-Gly-|-Phe-24.. The protein is Pepsin B (PGB) of Sus scrofa (Pig).